The chain runs to 151 residues: Ribosome maturation factor RimP (151 aa).

Belongs to the RimP family.

Its subcellular location is the cytoplasm. Its function is as follows. Required for maturation of 30S ribosomal subunits. This is Ribosome maturation factor RimP from Alcanivorax borkumensis (strain ATCC 700651 / DSM 11573 / NCIMB 13689 / SK2).